A 201-amino-acid chain; its full sequence is Transgelin (201 aa).

An N-acetylalanine modification is found at Ala-2. Residues 24–137 (EELEERLVEW…RTVMALGSLA (114 aa)) enclose the Calponin-homology (CH) domain. The tract at residues 154 to 161 (KKAQEHKR) is could be involved in actin-binding. Residue Ser-166 is modified to Phosphoserine. Lys-172 carries the post-translational modification N6-acetyllysine. The stretch at 175–200 (IGLQMGSNRGASQAGMTGYGRPRQII) is one Calponin-like repeat. At Ser-181 the chain carries Phosphoserine. An Omega-N-methylarginine modification is found at Arg-183.

This sequence belongs to the calponin family. In terms of tissue distribution, smooth muscle and mesenchymal cells but not in skeletal muscle or lymphocytes.

It is found in the cytoplasm. Actin cross-linking/gelling protein. This Rattus norvegicus (Rat) protein is Transgelin (Tagln).